The sequence spans 196 residues: CMRF35-like molecule 2 (196 aa).

A signal peptide spans 1–17 (MRLCAGLLLLCFQGCLS). One can recognise an Ig-like V-type domain in the interval 18 to 122 (LTGPGSVSGY…DSWSRDPSVS (105 aa)). Topologically, residues 18–171 (LTGPGSVSGY…QLWSLLSSIQ (154 aa)) are extracellular. A disulfide bond links C36 and C104. N-linked (GlcNAc...) asparagine glycosylation occurs at N84. The chain crosses the membrane as a helical span at residues 172–192 (FQVLVFLKLPLFLSMLCAIFW). The Cytoplasmic segment spans residues 193–196 (VNRL).

This sequence belongs to the CD300 family. As to quaternary structure, interacts with TYROBP.

It localises to the cell membrane. In terms of biological role, probably acts as an activating receptor. The polypeptide is CMRF35-like molecule 2 (Cd300e) (Mus musculus (Mouse)).